The primary structure comprises 443 residues: Magnesium transporter MRS2-10 (443 aa).

The disordered stretch occupies residues 1–33 (MSELKERLLPPRPASAINLRGDAGSRPSPSGRQ). 2 helical membrane passes run 379–399 (LLLT…GIFG) and 415–435 (WVLA…LWYY). The short motif at 399-401 (GMN) is the Required for magnesium transport activity element.

Belongs to the CorA metal ion transporter (MIT) (TC 1.A.35.5) family. Expressed in the whole plant.

It localises to the cell membrane. Its function is as follows. High-affinity magnesium transporter that mediates the influx of magnesium. Involved in tolerance to Aluminum. The sequence is that of Magnesium transporter MRS2-10 (MRS2-10) from Arabidopsis thaliana (Mouse-ear cress).